The sequence spans 490 residues: Betaine aldehyde dehydrogenase (490 aa).

Aspartate 93 contacts K(+). An NAD(+)-binding site is contributed by 150-152 (GAW). Residue lysine 162 is the Charge relay system of the active site. 176-179 (KPSE) contributes to the NAD(+) binding site. Position 180 (valine 180) interacts with K(+). 230 to 233 (GVKT) contacts NAD(+). Leucine 246 is a binding site for K(+). Glutamate 252 (proton acceptor) is an active-site residue. NAD(+) contacts are provided by glycine 254, cysteine 286, and glutamate 387. Catalysis depends on cysteine 286, which acts as the Nucleophile. A Cysteine sulfenic acid (-SOH) modification is found at cysteine 286. Positions 457 and 460 each coordinate K(+). Catalysis depends on glutamate 464, which acts as the Charge relay system.

Belongs to the aldehyde dehydrogenase family. Dimer of dimers. The cofactor is K(+).

It catalyses the reaction betaine aldehyde + NAD(+) + H2O = glycine betaine + NADH + 2 H(+). It functions in the pathway amine and polyamine biosynthesis; betaine biosynthesis via choline pathway; betaine from betaine aldehyde: step 1/1. Its function is as follows. Involved in the biosynthesis of the osmoprotectant glycine betaine. Catalyzes the irreversible oxidation of betaine aldehyde to the corresponding acid. This Serratia proteamaculans (strain 568) protein is Betaine aldehyde dehydrogenase.